The chain runs to 147 residues: Hemoglobin subunit beta-H1 (147 aa).

Residues histidine 3 to histidine 147 enclose the Globin domain. Histidine 64 and histidine 93 together coordinate heme b.

This sequence belongs to the globin family. Heterotetramer of two alpha chains and two beta chains. In terms of tissue distribution, red blood cells.

Its function is as follows. This is an embryonic beta-type chain. This chain is Hemoglobin subunit beta-H1 (Hbb-bh1), found in Mus musculus (Mouse).